The sequence spans 190 residues: Segregation and condensation protein B (190 aa).

The protein belongs to the ScpB family. Homodimer. Homodimerization may be required to stabilize the binding of ScpA to the Smc head domains. Component of a cohesin-like complex composed of ScpA, ScpB and the Smc homodimer, in which ScpA and ScpB bind to the head domain of Smc. The presence of the three proteins is required for the association of the complex with DNA.

The protein localises to the cytoplasm. Functionally, participates in chromosomal partition during cell division. May act via the formation of a condensin-like complex containing Smc and ScpA that pull DNA away from mid-cell into both cell halves. The polypeptide is Segregation and condensation protein B (Bacillus cereus (strain G9842)).